We begin with the raw amino-acid sequence, 1388 residues long: Dicer-like protein 2 (1388 aa).

The Helicase ATP-binding domain maps to 23–203; it reads MLEASMKENI…LLMVESNLDA (181 aa). 36–43 serves as a coordination point for ATP; that stretch reads MDTGSGKT. Residues 144-147 carry the DEAH box motif; sequence DEAH. The Helicase C-terminal domain maps to 368–537; it reads KFESLLNFLD…DDERQLQSVS (170 aa). A Dicer dsRNA-binding fold domain is found at 564–658; sequence AMAHLHHFCA…LPLTKKPELK (95 aa). RNase III domains are found at residues 906–1059 and 1098–1281; these read ISAI…VDGG and NDRL…VDSG. Positions 1137, 1267, and 1270 each coordinate Mg(2+).

This sequence belongs to the helicase family. Dicer subfamily. It depends on Mg(2+) as a cofactor. Requires Mn(2+) as cofactor.

Functionally, dicer-like endonuclease involved in cleaving double-stranded RNA in the RNA interference (RNAi) pathway. Produces 21 to 25 bp dsRNAs (siRNAs) which target the selective destruction of homologous RNAs leading to sequence-specific suppression of gene expression, called post-transcriptional gene silencing (PTGS). Part of a broad host defense response against viral infection and transposons. This is Dicer-like protein 2 (dcl2) from Aspergillus fumigatus (strain ATCC MYA-4609 / CBS 101355 / FGSC A1100 / Af293) (Neosartorya fumigata).